An 894-amino-acid chain; its full sequence is Alpha-actinin-2 (894 aa).

Residues 1–254 form an actin-binding region; it reads MNQIEPGVQY…IMTYVSCFYH (254 aa). 2 consecutive Calponin-homology (CH) domains span residues 38–142 and 151–257; these read KQQR…LRFA and TSAK…HAFA. At T237 the chain carries Phosphothreonine. Spectrin repeat units lie at residues 281–391, 401–506, 516–627, and 637–740; these read RLME…WLLN, HLAE…ALER, QLHL…SLQE, and RLRR…EVET. 2 EF-hand domains span residues 753 to 788 and 789 to 824; these read EQMN…MGYD and LGEA…ETAD. Residues D766, N770, D777, D802, N804, and T808 each coordinate Ca(2+).

It belongs to the alpha-actinin family. Homodimer; antiparallel. Also forms heterodimers with ACTN3. Interacts with ADAM12, MYOZ1, MYOZ2 and MYOZ3. Interacts via its C-terminal region with the LDB3 PDZ domain. Interacts with XIRP2. Interacts with DST (via N-terminus). Interacts with PARVB. Interacts with SYNPO2. Post-translationally, ubiquitinated by FBXL22, leading to proteasomal degradation.

The protein resides in the cytoplasm. The protein localises to the myofibril. It localises to the sarcomere. It is found in the z line. F-actin cross-linking protein which is thought to anchor actin to a variety of intracellular structures. This is a bundling protein. In Mus musculus (Mouse), this protein is Alpha-actinin-2 (Actn2).